A 508-amino-acid polypeptide reads, in one-letter code: Serine carboxypeptidase 3 (508 aa).

The first 19 residues, 1–19 (MVTTPRLVSLLLLLALCAA), serve as a signal peptide directing secretion. The propeptide occupies 20–80 (AAGALRLPPD…PGQLLERRVT (61 aa)). The segment at 48 to 67 (PKDSSSSSGRHGARVGEGNE) is disordered. At Leu81 the chain carries Blocked amino end (Leu). 3 disulfides stabilise this stretch: Cys133-Cys373, Cys301-Cys316, and Cys339-Cys344. N-linked (GlcNAc...) asparagine glycosylation occurs at Asn151. Ser223 is a catalytic residue. The active site involves Asp411. Cys414 is a binding site for substrate. Residue His468 is part of the active site. Positions 492-508 (EAVPEEESSTTSFYAAM) are excised as a propeptide.

It belongs to the peptidase S10 family. In terms of assembly, monomer.

The protein resides in the secreted. The catalysed reaction is Release of a C-terminal amino acid with broad specificity.. With respect to regulation, inhibited by mercuric ions. The polypeptide is Serine carboxypeptidase 3 (CBP3) (Hordeum vulgare (Barley)).